The sequence spans 236 residues: 2-C-methyl-D-erythritol 4-phosphate cytidylyltransferase (236 aa).

This sequence belongs to the IspD/TarI cytidylyltransferase family. IspD subfamily.

The enzyme catalyses 2-C-methyl-D-erythritol 4-phosphate + CTP + H(+) = 4-CDP-2-C-methyl-D-erythritol + diphosphate. The protein operates within isoprenoid biosynthesis; isopentenyl diphosphate biosynthesis via DXP pathway; isopentenyl diphosphate from 1-deoxy-D-xylulose 5-phosphate: step 2/6. In terms of biological role, catalyzes the formation of 4-diphosphocytidyl-2-C-methyl-D-erythritol from CTP and 2-C-methyl-D-erythritol 4-phosphate (MEP). The polypeptide is 2-C-methyl-D-erythritol 4-phosphate cytidylyltransferase (Burkholderia pseudomallei (strain 1106a)).